The following is an 881-amino-acid chain: Leucine--tRNA ligase (881 aa).

The short motif at 48–58 (PYPSGKLHMGH) is the 'HIGH' region element. The short motif at 638-642 (KMSKS) is the 'KMSKS' region element. Lysine 641 contributes to the ATP binding site.

This sequence belongs to the class-I aminoacyl-tRNA synthetase family.

It localises to the cytoplasm. It carries out the reaction tRNA(Leu) + L-leucine + ATP = L-leucyl-tRNA(Leu) + AMP + diphosphate. The chain is Leucine--tRNA ligase from Herminiimonas arsenicoxydans.